A 129-amino-acid polypeptide reads, in one-letter code: Ribulose bisphosphate carboxylase small subunit (129 aa).

Belongs to the RuBisCO small chain family. In terms of assembly, heterohexadecamer of 8 large and 8 small subunits.

Its function is as follows. RuBisCO catalyzes two reactions: the carboxylation of D-ribulose 1,5-bisphosphate, the primary event in carbon dioxide fixation, as well as the oxidative fragmentation of the pentose substrate. Both reactions occur simultaneously and in competition at the same active site. Although the small subunit is not catalytic it is essential for maximal activity. The chain is Ribulose bisphosphate carboxylase small subunit from Cereibacter sphaeroides (Rhodobacter sphaeroides).